The sequence spans 103 residues: UPF0145 protein pXO2-45/BXB0052/GBAA_pXO2_0052 (103 aa).

The protein belongs to the UPF0145 family.

The protein is UPF0145 protein pXO2-45/BXB0052/GBAA_pXO2_0052 of Bacillus anthracis.